Reading from the N-terminus, the 180-residue chain is Large ribosomal subunit protein uL5 (180 aa).

This sequence belongs to the universal ribosomal protein uL5 family. Part of the 50S ribosomal subunit; part of the 5S rRNA/L5/L18/L25 subcomplex. Contacts the 5S rRNA and the P site tRNA. Forms a bridge to the 30S subunit in the 70S ribosome.

Functionally, this is one of the proteins that bind and probably mediate the attachment of the 5S RNA into the large ribosomal subunit, where it forms part of the central protuberance. In the 70S ribosome it contacts protein S13 of the 30S subunit (bridge B1b), connecting the 2 subunits; this bridge is implicated in subunit movement. Contacts the P site tRNA; the 5S rRNA and some of its associated proteins might help stabilize positioning of ribosome-bound tRNAs. In Pediococcus pentosaceus (strain ATCC 25745 / CCUG 21536 / LMG 10740 / 183-1w), this protein is Large ribosomal subunit protein uL5.